A 452-amino-acid polypeptide reads, in one-letter code: Bifunctional protein GlmU (452 aa).

A pyrophosphorylase region spans residues M1–K224. UDP-N-acetyl-alpha-D-glucosamine is bound by residues L6 to G9, K20, Q71, G76 to T77, Y98 to D100, G135, E149, N164, and N222. D100 is a Mg(2+) binding site. Mg(2+) is bound at residue N222. The tract at residues V225–Q245 is linker. The interval G246–K452 is N-acetyltransferase. UDP-N-acetyl-alpha-D-glucosamine contacts are provided by R328 and K346. Residue H358 is the Proton acceptor of the active site. The UDP-N-acetyl-alpha-D-glucosamine site is built by Y361 and N372. Residues A375, N381–Y382, S400, A418, and R435 contribute to the acetyl-CoA site.

This sequence in the N-terminal section; belongs to the N-acetylglucosamine-1-phosphate uridyltransferase family. The protein in the C-terminal section; belongs to the transferase hexapeptide repeat family. In terms of assembly, homotrimer. Requires Mg(2+) as cofactor.

The protein localises to the cytoplasm. It carries out the reaction alpha-D-glucosamine 1-phosphate + acetyl-CoA = N-acetyl-alpha-D-glucosamine 1-phosphate + CoA + H(+). The enzyme catalyses N-acetyl-alpha-D-glucosamine 1-phosphate + UTP + H(+) = UDP-N-acetyl-alpha-D-glucosamine + diphosphate. It participates in nucleotide-sugar biosynthesis; UDP-N-acetyl-alpha-D-glucosamine biosynthesis; N-acetyl-alpha-D-glucosamine 1-phosphate from alpha-D-glucosamine 6-phosphate (route II): step 2/2. Its pathway is nucleotide-sugar biosynthesis; UDP-N-acetyl-alpha-D-glucosamine biosynthesis; UDP-N-acetyl-alpha-D-glucosamine from N-acetyl-alpha-D-glucosamine 1-phosphate: step 1/1. The protein operates within bacterial outer membrane biogenesis; LPS lipid A biosynthesis. Its function is as follows. Catalyzes the last two sequential reactions in the de novo biosynthetic pathway for UDP-N-acetylglucosamine (UDP-GlcNAc). The C-terminal domain catalyzes the transfer of acetyl group from acetyl coenzyme A to glucosamine-1-phosphate (GlcN-1-P) to produce N-acetylglucosamine-1-phosphate (GlcNAc-1-P), which is converted into UDP-GlcNAc by the transfer of uridine 5-monophosphate (from uridine 5-triphosphate), a reaction catalyzed by the N-terminal domain. The polypeptide is Bifunctional protein GlmU (Janthinobacterium sp. (strain Marseille) (Minibacterium massiliensis)).